A 65-amino-acid polypeptide reads, in one-letter code: uncharacterized protein (65 aa).

This is an uncharacterized protein from Thermoproteus tenax (TTV1).